Reading from the N-terminus, the 223-residue chain is Dephospho-CoA kinase (223 aa).

One can recognise a DPCK domain in the interval Leu22–Phe223. Cys30 to Thr35 contacts ATP.

This sequence belongs to the CoaE family.

It localises to the cytoplasm. The enzyme catalyses 3'-dephospho-CoA + ATP = ADP + CoA + H(+). It participates in cofactor biosynthesis; coenzyme A biosynthesis; CoA from (R)-pantothenate: step 5/5. Functionally, catalyzes the phosphorylation of the 3'-hydroxyl group of dephosphocoenzyme A to form coenzyme A. This Treponema denticola (strain ATCC 35405 / DSM 14222 / CIP 103919 / JCM 8153 / KCTC 15104) protein is Dephospho-CoA kinase.